The following is a 221-amino-acid chain: CASP-like protein 4B1 (221 aa).

The tract at residues 1 to 78 (MAMQLHAASP…HDHHGGGGGG (78 aa)) is disordered. At 1–87 (MAMQLHAASP…GDEATQLLNG (87 aa)) the chain is on the cytoplasmic side. The span at 19-33 (SPPPPPPLSPHPEPA) shows a compositional bias: pro residues. The segment covering 50 to 62 (APVATATTPLTPG) has biased composition (low complexity). Residues 88-108 (IVLVLRAGAALLSFVAMALVA) form a helical membrane-spanning segment. Residues 109 to 125 (SCRHGDWMDFLRYQEYR) lie on the Extracellular side of the membrane. The helical transmembrane segment at 126 to 146 (YLLGVSVVAFVYSAAQALKNF) threads the bilayer. Over 147 to 160 (RRRRRGAADASFLD) the chain is Cytoplasmic. A helical transmembrane segment spans residues 161-181 (FAGDQAVAYLLVTASAAALPI). Residues 182–196 (TIRMRSAVVNVFTDA) lie on the Extracellular side of the membrane. The chain crosses the membrane as a helical span at residues 197–217 (IAASIALGFLAFAALALSAML). At 218–221 (SRHA) the chain is on the cytoplasmic side.

It belongs to the Casparian strip membrane proteins (CASP) family. Homodimer and heterodimers.

It is found in the cell membrane. The polypeptide is CASP-like protein 4B1 (Hordeum vulgare subsp. vulgare (Domesticated barley)).